A 180-amino-acid polypeptide reads, in one-letter code: MGLDDFQGQNKDELSMIEVARAILQDSGKRMAFADIVNAVQNFLGKSDEEIRERLPQFYTDMNTDGEFISMGHNVWALRSWFPYESVDEEVNHPEDEEDVPRKKHHKKVNAFIGDSDDDDIIDYDSDDPEDEDLDVDEEDTNEDDYSDDDLDDADDNELDDGIEGQLSELHQDDLDDDDE.

Positions L14–W81 constitute an HTH HARE-type domain. The tract at residues E89–E180 is disordered. Residues D115–I163 are compositionally biased toward acidic residues.

This sequence belongs to the RpoE family. As to quaternary structure, RNAP is composed of a core of 2 alpha, a beta and a beta' subunits. The core is associated with a delta subunit and one of several sigma factors.

Participates in both the initiation and recycling phases of transcription. In the presence of the delta subunit, RNAP displays an increased specificity of transcription, a decreased affinity for nucleic acids, and an increased efficiency of RNA synthesis because of enhanced recycling. The protein is Probable DNA-directed RNA polymerase subunit delta of Lactobacillus johnsonii (strain CNCM I-12250 / La1 / NCC 533).